The following is a 64-amino-acid chain: UPF0434 protein MADE_1009415 (64 aa).

The protein belongs to the UPF0434 family.

This is UPF0434 protein MADE_1009415 from Alteromonas mediterranea (strain DSM 17117 / CIP 110805 / LMG 28347 / Deep ecotype).